Consider the following 528-residue polypeptide: FAD-dependent monooxygenase DEP2 (528 aa).

An N-terminal signal peptide occupies residues 1-23 (MEDGRSTFKVIIIGAGVTGLTLA). FAD is bound by residues Asp37, Arg110, Asp311, and Gly324. Residues 479–499 (VFPQILGVLMVMWSSVWLFHL) traverse the membrane as a helical segment. The N-linked (GlcNAc...) asparagine glycan is linked to Asn521.

This sequence belongs to the paxM FAD-dependent monooxygenase family. The cofactor is FAD.

The protein resides in the membrane. It functions in the pathway polyketide biosynthesis. FAD-dependent monooxygenase; part of the gene cluster that mediates the biosynthesis of depudecin, a highly oxidized eleven-carbon linear polyketide that acts as a histone deacetylase (HDAC) inhibitor and makes a small contribution to pathogenesis. The reducing polyketide synthase DEP5 is the central enzyme in depudecin biosynthesis by yielding the backbone polyketide chain. The monooxygenases DEP2 and DEP4, as well as the uncharacterized protein DEP1, then act as tailoring enzymes to modify the intermediate polyketide chain into depudecin. This Alternaria brassicicola (Dark leaf spot agent) protein is FAD-dependent monooxygenase DEP2.